We begin with the raw amino-acid sequence, 192 residues long: Secreted and transmembrane protein 1A (192 aa).

The N-terminal stretch at 1 to 27 (MMTCPSVPAIPTLWLFSILLLVVSLNA) is a signal peptide. The Extracellular segment spans residues 28 to 165 (QNKSWDNPIC…SSPIEGKPGT (138 aa)). N-linked (GlcNAc...) asparagine glycosylation is found at Asn29, Asn55, Asn84, and Asn127. The helical transmembrane segment at 166 to 186 (LVGVITVIFILGVAGFITFIY) threads the bilayer. The Cytoplasmic portion of the chain corresponds to 187-192 (YRHRRS).

This sequence belongs to the SECTM family.

It localises to the cell membrane. The protein localises to the secreted. The protein is Secreted and transmembrane protein 1A of Mus musculus (Mouse).